Here is a 223-residue protein sequence, read N- to C-terminus: Acetate CoA-transferase subunit beta (223 aa).

Glu46 is a catalytic residue.

Belongs to the 3-oxoacid CoA-transferase subunit B family. Heterotetramer composed of two alpha subunits (AtoD) and two beta subunits (AtoA).

It carries out the reaction an acyl-CoA + acetate = a carboxylate + acetyl-CoA. The enzyme catalyses acetoacetate + acetyl-CoA = acetoacetyl-CoA + acetate. Its pathway is lipid metabolism; short-chain fatty acid metabolism. Coenzyme A transferase which is involved in short-chain fatty acid degradation and catalyzes the activation of short-chain fatty acids to their respective CoA thiolesters. The chain is Acetate CoA-transferase subunit beta (atoA) from Haemophilus influenzae (strain ATCC 51907 / DSM 11121 / KW20 / Rd).